Here is a 105-residue protein sequence, read N- to C-terminus: 5-hydroxymethyl-dUMP N-hydrolase (105 aa).

The 5-hydroxymethyl-dUMP site is built by G6, I8, S42, G44, E48, and S72.

This sequence belongs to the 2'-deoxynucleoside 5'-phosphate N-hydrolase 1 family. As to quaternary structure, monomer and homodimer.

The protein resides in the cytoplasm. Its subcellular location is the nucleus. The enzyme catalyses 5-hydroxymethyl-dUMP + H2O = 5-hydroxymethyluracil + 2-deoxy-D-ribose 5-phosphate. Its function is as follows. Part of a nucleotide salvage pathway that eliminates epigenetically modified 5-hydroxymethyl-dCMP (hmdCMP) in a two-step process entailing deamination to cytotoxic 5-hydroxymethyl-dUMP (hmdUMP), followed by its hydrolysis into 5-hydroxymethyluracil (hmU) and 2-deoxy-D-ribose 5-phosphate (deoxyribosephosphate). Catalyzes the second step in that pathway, the hydrolysis of the N-glycosidic bond in hmdUMP, degrading this cytotoxic nucleotide to avoid its genomic integration. The polypeptide is 5-hydroxymethyl-dUMP N-hydrolase (Branchiostoma floridae (Florida lancelet)).